The primary structure comprises 248 residues: Ubiquinone biosynthesis O-methyltransferase (248 aa).

Residues Arg41, Gly72, Asp93, and Met136 each contribute to the S-adenosyl-L-methionine site.

Belongs to the methyltransferase superfamily. UbiG/COQ3 family.

It carries out the reaction a 3-demethylubiquinol + S-adenosyl-L-methionine = a ubiquinol + S-adenosyl-L-homocysteine + H(+). The catalysed reaction is a 3-(all-trans-polyprenyl)benzene-1,2-diol + S-adenosyl-L-methionine = a 2-methoxy-6-(all-trans-polyprenyl)phenol + S-adenosyl-L-homocysteine + H(+). The protein operates within cofactor biosynthesis; ubiquinone biosynthesis. Its function is as follows. O-methyltransferase that catalyzes the 2 O-methylation steps in the ubiquinone biosynthetic pathway. In Rhizobium johnstonii (strain DSM 114642 / LMG 32736 / 3841) (Rhizobium leguminosarum bv. viciae), this protein is Ubiquinone biosynthesis O-methyltransferase.